The chain runs to 602 residues: Threonine--tRNA ligase (602 aa).

The catalytic stretch occupies residues 208-499; that stretch reads DHRKLGTELK…LTEHCAGEFP (292 aa). Residues Cys-300, His-351, and His-476 each coordinate Zn(2+).

It belongs to the class-II aminoacyl-tRNA synthetase family. As to quaternary structure, homodimer. Zn(2+) serves as cofactor.

The protein localises to the cytoplasm. The catalysed reaction is tRNA(Thr) + L-threonine + ATP = L-threonyl-tRNA(Thr) + AMP + diphosphate + H(+). In terms of biological role, catalyzes the attachment of threonine to tRNA(Thr) in a two-step reaction: L-threonine is first activated by ATP to form Thr-AMP and then transferred to the acceptor end of tRNA(Thr). Also edits incorrectly charged L-seryl-tRNA(Thr). The sequence is that of Threonine--tRNA ligase from Campylobacter jejuni (strain RM1221).